Reading from the N-terminus, the 153-residue chain is SsrA-binding protein (153 aa).

The protein belongs to the SmpB family.

It is found in the cytoplasm. Functionally, required for rescue of stalled ribosomes mediated by trans-translation. Binds to transfer-messenger RNA (tmRNA), required for stable association of tmRNA with ribosomes. tmRNA and SmpB together mimic tRNA shape, replacing the anticodon stem-loop with SmpB. tmRNA is encoded by the ssrA gene; the 2 termini fold to resemble tRNA(Ala) and it encodes a 'tag peptide', a short internal open reading frame. During trans-translation Ala-aminoacylated tmRNA acts like a tRNA, entering the A-site of stalled ribosomes, displacing the stalled mRNA. The ribosome then switches to translate the ORF on the tmRNA; the nascent peptide is terminated with the 'tag peptide' encoded by the tmRNA and targeted for degradation. The ribosome is freed to recommence translation, which seems to be the essential function of trans-translation. The chain is SsrA-binding protein from Lactobacillus delbrueckii subsp. bulgaricus (strain ATCC 11842 / DSM 20081 / BCRC 10696 / JCM 1002 / NBRC 13953 / NCIMB 11778 / NCTC 12712 / WDCM 00102 / Lb 14).